We begin with the raw amino-acid sequence, 373 residues long: Dual-specificity RNA methyltransferase RlmN (373 aa).

Glu-104 serves as the catalytic Proton acceptor. The Radical SAM core domain maps to Lys-110–Asp-349. A disulfide bond links Cys-117 and Cys-354. [4Fe-4S] cluster-binding residues include Cys-124, Cys-128, and Cys-131. S-adenosyl-L-methionine-binding positions include Gly-178–Glu-179, Ser-210, Ser-232–His-234, and Asn-311. Cys-354 acts as the S-methylcysteine intermediate in catalysis.

Belongs to the radical SAM superfamily. RlmN family. Requires [4Fe-4S] cluster as cofactor.

It is found in the cytoplasm. It catalyses the reaction adenosine(2503) in 23S rRNA + 2 reduced [2Fe-2S]-[ferredoxin] + 2 S-adenosyl-L-methionine = 2-methyladenosine(2503) in 23S rRNA + 5'-deoxyadenosine + L-methionine + 2 oxidized [2Fe-2S]-[ferredoxin] + S-adenosyl-L-homocysteine. The catalysed reaction is adenosine(37) in tRNA + 2 reduced [2Fe-2S]-[ferredoxin] + 2 S-adenosyl-L-methionine = 2-methyladenosine(37) in tRNA + 5'-deoxyadenosine + L-methionine + 2 oxidized [2Fe-2S]-[ferredoxin] + S-adenosyl-L-homocysteine. Its function is as follows. Specifically methylates position 2 of adenine 2503 in 23S rRNA and position 2 of adenine 37 in tRNAs. m2A2503 modification seems to play a crucial role in the proofreading step occurring at the peptidyl transferase center and thus would serve to optimize ribosomal fidelity. The polypeptide is Dual-specificity RNA methyltransferase RlmN (Buchnera aphidicola subsp. Baizongia pistaciae (strain Bp)).